Consider the following 360-residue polypeptide: S-adenosylmethionine-dependent nucleotide dehydratase RSAD2 (360 aa).

Residues 44–71 (KGQPRVRGEPKETQETHEDPGSAQPTTP) are disordered. The segment covering 49–63 (VRGEPKETQETHEDP) has biased composition (basic and acidic residues). Residues 68–288 (PTTPVSVNYH…LQRHKDVSCL (221 aa)) form the Radical SAM core domain. [4Fe-4S] cluster is bound by residues C82, C86, and C89. K196 carries the N6-acetyllysine modification. Residue K205 forms a Glycyl lysine isopeptide (Lys-Gly) (interchain with G-Cter in ubiquitin) linkage.

It belongs to the radical SAM superfamily. RSAD2 family. Homodimer. Interacts with IRAK1 and TRAF6. Interacts with FPPS. Interacts with HADHB. Interacts (via C-terminus) with VAPA/VAP33 (via C-terminus). It depends on [4Fe-4S] cluster as a cofactor. Post-translationally, acetylated by HAT1. HAT1-mediated acetylation of Lys-196 in turn recruits UBE4A that stimulates RSAD2 polyubiquitination leading to proteasomal degradation. 'Lys-6'-linked polyubiquitination at Lys-205 leads to RSAD2 protein degradation. In terms of tissue distribution, in neonatal rat tibia, specifically localized in cells of the periosteum, in osteoblasts lining endosteal and peristeal bone surfaces, to articular surfaces of cartilage and in perichondral cells but not in chondrocytes (at protein level). Expressed predominantly in bone marrow and spleen.

It is found in the endoplasmic reticulum membrane. It localises to the golgi apparatus. Its subcellular location is the endoplasmic reticulum. The protein resides in the lipid droplet. The protein localises to the mitochondrion. It is found in the mitochondrion inner membrane. It localises to the mitochondrion outer membrane. The catalysed reaction is CTP + AH2 + S-adenosyl-L-methionine = 3'-deoxy-3',4'-didehydro-CTP + 5'-deoxyadenosine + L-methionine + A + H2O + H(+). IRAK1 and TRAF6 synergistically activate RSAD2 increasing its activity with CTP as substrate about 10-fold. Functionally, interferon-inducible antiviral protein which plays a major role in the cell antiviral state induced by type I and type II interferon. Catalyzes the conversion of cytidine triphosphate (CTP) to 3'-deoxy-3',4'-didehydro-CTP (ddhCTP) via a SAM-dependent radical mechanism. In turn, ddhCTP acts as a chain terminator for the RNA-dependent RNA polymerases from multiple viruses and directly inhibits viral replication. Therefore, inhibits a wide range of DNA and RNA viruses. Also promotes TLR7 and TLR9-dependent production of IFN-beta production in plasmacytoid dendritic cells (pDCs) by facilitating 'Lys-63'-linked ubiquitination of IRAK1 by TRAF6. Plays a role in CD4+ T-cells activation and differentiation. Facilitates T-cell receptor (TCR)-mediated GATA3 activation and optimal T-helper 2 (Th2) cytokine production by modulating NFKB1 and JUNB activities. Can inhibit secretion of soluble proteins. This chain is S-adenosylmethionine-dependent nucleotide dehydratase RSAD2, found in Rattus norvegicus (Rat).